Consider the following 272-residue polypeptide: Putative esterase/lipase 3 (272 aa).

Histidine 34 is an active-site residue. Serine 100 (charge relay system) is an active-site residue.

It belongs to the lipase/esterase LIP3/BchO family.

In Mycoplasma pneumoniae (strain ATCC 29342 / M129 / Subtype 1) (Mycoplasmoides pneumoniae), this protein is Putative esterase/lipase 3.